The sequence spans 1129 residues: Translation initiation factor IF-2 (1129 aa).

Low complexity-rich tracts occupy residues 33 to 42 (AARSHSSSIS) and 56 to 99 (GGSP…AAKP). Disordered stretches follow at residues 33–462 (AARS…IGEN) and 485–515 (SLAR…ETAR). Over residues 100–112 (SPKPSAPSRPEAP) the composition is skewed to pro residues. A compositionally biased stretch (low complexity) spans 135–147 (STPAAAAPAAAPS). Pro residues predominate over residues 148 to 161 (APAPSAPTPRPKPT). A compositionally biased stretch (low complexity) spans 162–175 (APKASAPAPTASAP). Pro residues-rich tracts occupy residues 176 to 191 (SAPP…PAPA) and 211 to 221 (PTAPPTRPQPK). Over residues 257-273 (GQRPGVSPRPSGPPGQR) the composition is skewed to low complexity. Positions 431–445 (GRPDWDDSAKLEALR) are enriched in basic and acidic residues. Basic residues-rich tracts occupy residues 490 to 499 (SKPRTKHKPA) and 506 to 515 (IRKRRKETAR). A tr-type G domain is found at 621–793 (RRPPVVTVMG…ILLVTEVEDL (173 aa)). A G1 region spans residues 630–637 (GHVDHGKT). 630 to 637 (GHVDHGKT) serves as a coordination point for GTP. The segment at 655–659 (GITQH) is G2. The G3 stretch occupies residues 680–683 (DTPG). Residues 680 to 684 (DTPGH) and 734 to 737 (NKID) contribute to the GTP site. The interval 734 to 737 (NKID) is G4. The tract at residues 770–772 (SAL) is G5.

It belongs to the TRAFAC class translation factor GTPase superfamily. Classic translation factor GTPase family. IF-2 subfamily.

The protein localises to the cytoplasm. Functionally, one of the essential components for the initiation of protein synthesis. Protects formylmethionyl-tRNA from spontaneous hydrolysis and promotes its binding to the 30S ribosomal subunits. Also involved in the hydrolysis of GTP during the formation of the 70S ribosomal complex. This chain is Translation initiation factor IF-2, found in Synechococcus sp. (strain CC9311).